We begin with the raw amino-acid sequence, 522 residues long: Lysine--tRNA ligase (522 aa).

The 'HIGH' region signature appears at 44-52 (PSGLPHIGT). Residues 290–294 (KISKS) carry the 'KMSKS' region motif. Lys293 contacts ATP.

Belongs to the class-I aminoacyl-tRNA synthetase family.

The protein localises to the cytoplasm. The catalysed reaction is tRNA(Lys) + L-lysine + ATP = L-lysyl-tRNA(Lys) + AMP + diphosphate. The chain is Lysine--tRNA ligase from Rickettsia massiliae (strain Mtu5).